We begin with the raw amino-acid sequence, 132 residues long: MVKNQAQKKGVKRKQVKNIPSGIVHVKATFNNTIVTITDPAGNVISWASAGKVGYSGSRKSSAFAATVAAQDAAKAAMSSGLKEVEVGLKGTGAGRESAVRALISSGLIVSVIRDETPVPHNGCRPRKRRRV.

It belongs to the universal ribosomal protein uS11 family. In terms of assembly, part of the 30S ribosomal subunit. Interacts with proteins S7 and S18. Binds to IF-3.

In terms of biological role, located on the platform of the 30S subunit, it bridges several disparate RNA helices of the 16S rRNA. Forms part of the Shine-Dalgarno cleft in the 70S ribosome. The protein is Small ribosomal subunit protein uS11 of Chlamydia trachomatis serovar A (strain ATCC VR-571B / DSM 19440 / HAR-13).